A 97-amino-acid polypeptide reads, in one-letter code: Aspartyl/glutamyl-tRNA(Asn/Gln) amidotransferase subunit C (97 aa).

Belongs to the GatC family. As to quaternary structure, heterotrimer of A, B and C subunits.

The enzyme catalyses L-glutamyl-tRNA(Gln) + L-glutamine + ATP + H2O = L-glutaminyl-tRNA(Gln) + L-glutamate + ADP + phosphate + H(+). It catalyses the reaction L-aspartyl-tRNA(Asn) + L-glutamine + ATP + H2O = L-asparaginyl-tRNA(Asn) + L-glutamate + ADP + phosphate + 2 H(+). Functionally, allows the formation of correctly charged Asn-tRNA(Asn) or Gln-tRNA(Gln) through the transamidation of misacylated Asp-tRNA(Asn) or Glu-tRNA(Gln) in organisms which lack either or both of asparaginyl-tRNA or glutaminyl-tRNA synthetases. The reaction takes place in the presence of glutamine and ATP through an activated phospho-Asp-tRNA(Asn) or phospho-Glu-tRNA(Gln). This is Aspartyl/glutamyl-tRNA(Asn/Gln) amidotransferase subunit C from Synechococcus sp. (strain JA-3-3Ab) (Cyanobacteria bacterium Yellowstone A-Prime).